Consider the following 955-residue polypeptide: 2-oxoglutarate dehydrogenase E1 component (955 aa).

This sequence belongs to the alpha-ketoglutarate dehydrogenase family. Homodimer. Part of the 2-oxoglutarate dehydrogenase (OGDH) complex composed of E1 (2-oxoglutarate dehydrogenase), E2 (dihydrolipoamide succinyltransferase) and E3 (dihydrolipoamide dehydrogenase); the complex contains multiple copies of the three enzymatic components (E1, E2 and E3). Thiamine diphosphate serves as cofactor.

The enzyme catalyses N(6)-[(R)-lipoyl]-L-lysyl-[protein] + 2-oxoglutarate + H(+) = N(6)-[(R)-S(8)-succinyldihydrolipoyl]-L-lysyl-[protein] + CO2. Functionally, E1 component of the 2-oxoglutarate dehydrogenase (OGDH) complex which catalyzes the decarboxylation of 2-oxoglutarate, the first step in the conversion of 2-oxoglutarate to succinyl-CoA and CO(2). This is 2-oxoglutarate dehydrogenase E1 component from Bacillus cereus (strain B4264).